A 421-amino-acid chain; its full sequence is Testin (421 aa).

The PET domain occupies 92–199 (MILTNPVAAK…GDVKLPCEMD (108 aa)). A disordered region spans residues 133–164 (EKQPVAGSEGAQYRKKQLAKQLPAHDQDPSKC). The segment covering 155-164 (PAHDQDPSKC) has biased composition (basic and acidic residues). 3 LIM zinc-binding domains span residues 234–297 (YSCY…CDSE), 299–359 (PRCA…NHAV), and 362–421 (QGCH…KRMS).

This sequence belongs to the prickle / espinas / testin family. In terms of assembly, interacts via LIM domain 1 with ZYX. Interacts (via LIM domain 3) with ENAH and VASP. Interacts with ALKBH4, talin, actin, alpha-actinin, GRIP1 and PXN. Interacts (via LIM domain 2) with ACTL7A (via N-terminus). Heterodimer with ACTL7A; the heterodimer interacts with ENAH to form a heterotrimer.

It localises to the cytoplasm. Its subcellular location is the cell junction. It is found in the focal adhesion. Its function is as follows. Scaffold protein that may play a role in cell adhesion, cell spreading and in the reorganization of the actin cytoskeleton. Plays a role in the regulation of cell proliferation. May act as a tumor suppressor. The sequence is that of Testin (TES) from Pan troglodytes (Chimpanzee).